The primary structure comprises 415 residues: uncharacterized protein (415 aa).

A TRAM domain is found at 1–52 (MQDLTINAIGAQGDGLARTADGKPAFVPLTLPGEVVRAKMDGARGEVVEILA). [4Fe-4S] cluster-binding residues include cysteine 62, cysteine 68, cysteine 71, and cysteine 147. Residues glutamine 252, tyrosine 279, glutamate 299, and aspartate 347 each contribute to the S-adenosyl-L-methionine site. Cysteine 373 serves as the catalytic Nucleophile.

Belongs to the class I-like SAM-binding methyltransferase superfamily. RNA M5U methyltransferase family.

This is an uncharacterized protein from Caulobacter vibrioides (strain ATCC 19089 / CIP 103742 / CB 15) (Caulobacter crescentus).